Reading from the N-terminus, the 641-residue chain is Fructose-1,6-bisphosphatase class 3 (641 aa).

The protein belongs to the FBPase class 3 family. It depends on Mn(2+) as a cofactor.

The catalysed reaction is beta-D-fructose 1,6-bisphosphate + H2O = beta-D-fructose 6-phosphate + phosphate. The protein operates within carbohydrate biosynthesis; gluconeogenesis. The polypeptide is Fructose-1,6-bisphosphatase class 3 (Latilactobacillus sakei subsp. sakei (strain 23K) (Lactobacillus sakei subsp. sakei)).